A 170-amino-acid polypeptide reads, in one-letter code: Acireductone dioxygenase (170 aa).

Residues His-99, His-101, Glu-105, and His-144 each contribute to the Fe(2+) site. Ni(2+) contacts are provided by His-99, His-101, Glu-105, and His-144.

Belongs to the acireductone dioxygenase (ARD) family. As to quaternary structure, monomer. Fe(2+) is required as a cofactor. It depends on Ni(2+) as a cofactor.

The catalysed reaction is 1,2-dihydroxy-5-(methylsulfanyl)pent-1-en-3-one + O2 = 3-(methylsulfanyl)propanoate + CO + formate + 2 H(+). The enzyme catalyses 1,2-dihydroxy-5-(methylsulfanyl)pent-1-en-3-one + O2 = 4-methylsulfanyl-2-oxobutanoate + formate + 2 H(+). Its pathway is amino-acid biosynthesis; L-methionine biosynthesis via salvage pathway; L-methionine from S-methyl-5-thio-alpha-D-ribose 1-phosphate: step 5/6. Functionally, catalyzes 2 different reactions between oxygen and the acireductone 1,2-dihydroxy-3-keto-5-methylthiopentene (DHK-MTPene) depending upon the metal bound in the active site. Fe-containing acireductone dioxygenase (Fe-ARD) produces formate and 2-keto-4-methylthiobutyrate (KMTB), the alpha-ketoacid precursor of methionine in the methionine recycle pathway. Ni-containing acireductone dioxygenase (Ni-ARD) produces methylthiopropionate, carbon monoxide and formate, and does not lie on the methionine recycle pathway. This is Acireductone dioxygenase from Bacillus cytotoxicus (strain DSM 22905 / CIP 110041 / 391-98 / NVH 391-98).